Consider the following 46-residue polypeptide: Defensin-like protein 2 (46 aa).

4 disulfides stabilise this stretch: Cys-3–Cys-46, Cys-13–Cys-33, Cys-19–Cys-40, and Cys-23–Cys-42.

As to quaternary structure, monomer. In terms of tissue distribution, present in seeds, cotyledons and leaves. Not found in roots or stems.

Functionally, has antibacterial activity against the Gram-positive bacterium S.aureus and the Gram-negative bacteria E.coli and P.syringae. Does not have antibacterial activity against the phytopathogenic bacteria R.solanacearum, Rhataybacter sp and Erwinia sp. Does not inhibit trypsin, chymotrypsin or alpha-amylases. The protein is Defensin-like protein 2 of Vigna unguiculata (Cowpea).